The sequence spans 264 residues: E3 ubiquitin-protein ligase MARCHF8 (264 aa).

The disordered stretch occupies residues 15–47 (LGHSVSRSSNISKAGSPTSVSAPSRFPRTSVTP). Positions 16-47 (GHSVSRSSNISKAGSPTSVSAPSRFPRTSVTP) are enriched in polar residues. The RING-CH-type zinc finger occupies 45-106 (VTPSSQDICR…ELCKFEFIME (62 aa)). 8 residues coordinate Zn(2+): cysteine 53, cysteine 56, cysteine 70, cysteine 72, histidine 80, cysteine 83, cysteine 96, and cysteine 99. 2 consecutive transmembrane segments (helical) span residues 130-150 (CSVTFHVIAITCVVWSLYVLI) and 170-190 (FWTKLVVVAIGFTGGLLFMYV).

The protein localises to the cytoplasmic vesicle membrane. It localises to the lysosome membrane. Its subcellular location is the early endosome membrane. It catalyses the reaction S-ubiquitinyl-[E2 ubiquitin-conjugating enzyme]-L-cysteine + [acceptor protein]-L-lysine = [E2 ubiquitin-conjugating enzyme]-L-cysteine + N(6)-ubiquitinyl-[acceptor protein]-L-lysine.. It functions in the pathway protein modification; protein ubiquitination. Functionally, E3 ubiquitin-protein ligase that mediates ubiquitination of cd86 and MHC class II proteins, such as hla-dr alpha and beta, and promotes their subsequent endocytosis and sorting to lysosomes via multivesicular bodies. The protein is E3 ubiquitin-protein ligase MARCHF8 (marchf8) of Xenopus laevis (African clawed frog).